A 449-amino-acid chain; its full sequence is Phosphoglucosamine mutase (449 aa).

Ser-101 acts as the Phosphoserine intermediate in catalysis. 4 residues coordinate Mg(2+): Ser-101, Asp-242, Asp-244, and Asp-246. Ser-101 carries the post-translational modification Phosphoserine.

The protein belongs to the phosphohexose mutase family. Mg(2+) is required as a cofactor. In terms of processing, activated by phosphorylation.

The enzyme catalyses alpha-D-glucosamine 1-phosphate = D-glucosamine 6-phosphate. In terms of biological role, catalyzes the conversion of glucosamine-6-phosphate to glucosamine-1-phosphate. This chain is Phosphoglucosamine mutase, found in Hyphomonas neptunium (strain ATCC 15444).